The chain runs to 214 residues: Neurogenin-3 (214 aa).

The span at 1–14 (MTPQPSGAPTVQVT) shows a compositional bias: polar residues. Residues 1 to 98 (MTPQPSGAPT…NDRERNRMHN (98 aa)) are disordered. Over residues 15–26 (RETERSFPRASE) the composition is skewed to basic and acidic residues. Composition is skewed to basic residues over residues 57–70 (APRKLRARRGGRSR) and 79–88 (KQRRSRRKKA). One can recognise a bHLH domain in the interval 83–135 (SRRKKANDRERNRMHNLNSALDALRGVLPTFPDDAKLTKIETLRFAHNYIWAL).

In terms of assembly, efficient DNA binding requires dimerization with another bHLH protein. Interacts with ATOH8.

It is found in the nucleus. Its function is as follows. Acts as a transcriptional regulator. Together with NKX2-2, initiates transcriptional activation of NEUROD1. Involved in neurogenesis. Also required for the specification of a common precursor of the 4 pancreatic endocrine cell types. This chain is Neurogenin-3 (NEUROG3), found in Homo sapiens (Human).